The primary structure comprises 338 residues: MNTEATHEENAPHTTGERLRLAREQLGLSQQVVAERLCLKVSTVRDIEEDKAPADLASTFLRGYIRSYARLVHVPEEELLPMLAKQAPVRTAQVAPMQTYALGKSRKKRDGWLMSFTWLVLFVVVGLTGAWWWQNHKAQQEEISTMADQSSAELSQNAANSPQSVPLNTDNTADASQDQATPPADLPSGDTQNTASNNPQPTPVPSSNTASQQPVVVPPSQANTDTAAQQNTTQPAQSQLPVGQASTAPAADANALVMNFTADCWLEVTDATGKKLFSGLQRKDTNLNLSGQAPYRLKIGAPSAVQIQYQGKPVDLSRFIRTNQVARLTLNAEQSVTQ.

The Cytoplasmic portion of the chain corresponds to 1 to 111 (MNTEATHEEN…LGKSRKKRDG (111 aa)). An HTH cro/C1-type domain is found at 19-71 (LRLAREQLGLSQQVVAERLCLKVSTVRDIEEDKAPADLASTFLRGYIRSYARL). The H-T-H motif DNA-binding region spans 30-49 (QQVVAERLCLKVSTVRDIEE). A helical; Signal-anchor for type II membrane protein transmembrane segment spans residues 112–132 (WLMSFTWLVLFVVVGLTGAWW). Residues 133–338 (WQNHKAQQEE…TLNAEQSVTQ (206 aa)) lie on the Periplasmic side of the membrane. Composition is skewed to polar residues over residues 147–180 (ADQS…QDQA) and 189–214 (GDTQ…SQQP). The tract at residues 147 to 245 (ADQSSAELSQ…AQSQLPVGQA (99 aa)) is disordered. Low complexity predominate over residues 220 to 239 (SQANTDTAAQQNTTQPAQSQ).

This sequence belongs to the RodZ family.

The protein localises to the cell inner membrane. Its function is as follows. Cytoskeletal protein that is involved in cell-shape control through regulation of the length of the long axis. This Cronobacter sakazakii (strain ATCC BAA-894) (Enterobacter sakazakii) protein is Cytoskeleton protein RodZ.